A 226-amino-acid chain; its full sequence is Thioredoxin domain-containing protein 9 (226 aa).

Positions 75-180 (EIGSERDFFQ…TTETLEWRLG (106 aa)) constitute a Thioredoxin domain. A phosphoserine mark is found at Ser-188, Ser-221, and Ser-223.

Forms ternary complexes with the chaperonin TCP1 complex, spanning the cylindrical chaperonin cavity and contacting at least 2 subunits. Expressed in testis, liver, heart, kidney, brain, spleen and lung.

It is found in the cytoplasm. The protein resides in the nucleus. The protein localises to the cytoskeleton. Its subcellular location is the microtubule organizing center. It localises to the centrosome. It is found in the midbody. In terms of biological role, significantly diminishes the chaperonin TCP1 complex ATPase activity, thus negatively impacts protein folding, including that of actin or tubulin. The protein is Thioredoxin domain-containing protein 9 (Txndc9) of Mus musculus (Mouse).